Reading from the N-terminus, the 248-residue chain is Inhibitor of growth protein 4 (248 aa).

A coiled-coil region spans residues 25–118 (FQLMRDLDQR…ADLKEKQIES (94 aa)). An N6-acetyllysine mark is found at K112, K127, and K129. Residues 115–160 (QIESSDYDSSSSKGKKSRTQKEKKAARARSKGKNSDEEAPKAAQKK) form a disordered region. The short motif at 127 to 147 (KGKKSRTQKEKKAARARSKGK) is the Bipartite nuclear localization signal element. R132 bears the Citrulline mark. N6-acetyllysine occurs at positions 145, 147, and 155. A Citrulline modification is found at R165. The PHD-type zinc finger occupies 195–244 (PTYCLCHQVSYGEMIGCDNPDCSIERFHFACVGLTTKPRGKWFCPRCSQE). Zn(2+) is bound by residues C198, C200, C211, C216, H222, C225, C238, and C241.

Belongs to the ING family. In terms of assembly, homodimer. Component of the HBO1 complex composed of KAT7/HBO1, MEAF6, ING4 or ING5, and one scaffold subunit: complexes containing BRPF scaffold (BRPF1, BRD1/BRPF2 or BRPF3) direct KAT7/HBO1 specificity towards H3K14ac, while complexes containing JADE scaffold (JADE1, JADE2 and JADE3) mediate acetylation of histone H4. Interacts with H3K4me3 and to a lesser extent with H3K4me2, the interaction augments KAT7/HBO1 acetylation activity on H3 tails. Interacts with EP300, RELA and TP53; these interactions may be indirect. Interacts with EGLN1. Interacts with BCL2A1. Citrullination by PADI4 within the nuclear localization signal disrupts the interaction with p53 and increases susceptibility to degradation.

Its subcellular location is the nucleus. Functionally, component of HBO1 complexes, which specifically mediate acetylation of histone H3 at 'Lys-14' (H3K14ac), and have reduced activity toward histone H4. Through chromatin acetylation it may function in DNA replication. May inhibit tumor progression by modulating the transcriptional output of signaling pathways which regulate cell proliferation. Can suppress brain tumor angiogenesis through transcriptional repression of RELA/NFKB3 target genes when complexed with RELA. May also specifically suppress loss of contact inhibition elicited by activated oncogenes such as MYC. Represses hypoxia inducible factor's (HIF) activity by interacting with HIF prolyl hydroxylase 2 (EGLN1). Can enhance apoptosis induced by serum starvation in mammary epithelial cell line HC11. This Bos taurus (Bovine) protein is Inhibitor of growth protein 4 (ING4).